The chain runs to 784 residues: Protein Skeletor, isoforms B/C (784 aa).

Positions 1–28 (MLAMKDKPWLLLFGLLAALSCLASFGDA) are cleaved as a signal peptide. DM13 domains are found at residues 34–143 (GTKI…VSIP) and 151–258 (PQKI…VRLP). The region spanning 287–419 (LAFEVRWAVA…GAESVVWAIG (133 aa)) is the DOMON domain. The disordered stretch occupies residues 451–491 (PLPEGARGNSNSSEQEDSAPAAQSSTGGAGYPPAGRPNVEP).

As to quaternary structure, interacts with Chro and Mgtor as part of a macromolecular complex forming the spindle matrix. Chro colocalizes with Skeletor (Skel) on the chromosomes at interphase and on spindle during metaphase.

It is found in the cytoplasm. It localises to the cytoskeleton. The protein localises to the spindle. Its subcellular location is the nucleus. The protein resides in the nucleolus. It is found in the chromosome. Its function is as follows. Provides structural support to stabilize and organize the microtubule spindle during mitosis (within embryonic somatic cells) and meiosis (within spermatocytes). The role in mitosis regulation depends on the Ran pathway. This is Protein Skeletor, isoforms B/C from Drosophila melanogaster (Fruit fly).